Consider the following 507-residue polypeptide: WD-40 repeat-containing protein MSI4 (507 aa).

An N-acetylmethionine modification is found at methionine 1. Positions 1–66 are disordered; that stretch reads MESDEAAAVS…KTQQSPSVDE (66 aa). 3 WD repeats span residues 95-137, 162-202, and 217-257; these read RWGP…KPRV, IHPG…NRHA, and GHQD…TTIG. Polar residues predominate over residues 258–272; that stretch reads TDSKSSGSIIKQTGE. Residues 258-282 are disordered; the sequence is TDSKSSGSIIKQTGEGTDKNESPTV. 4 WD repeats span residues 290 to 330, 335 to 375, 384 to 424, and 439 to 486; these read GHED…NPVT, AHDA…ANGV, GHKA…KKSD, and GHRD…YRPE. The DWD box motif lies at 308–323; the sequence is FCSVGDDSCLILWDAR.

This sequence belongs to the WD repeat RBAP46/RBAP48/MSI1 family. Interacts with AHL16 and HOS1. Interacts with LHP1, PDP1, PDP2 and PDP3. Component of the PRC2 (polycomb repressive complex 2) complex which regulates histone methylation on histone H3K27. In terms of tissue distribution, expressed in rosette leaves, cauline leaves, main stems and developing fruits. Expressed at higher levels in roots and flowers.

Its subcellular location is the nucleus. In terms of biological role, core histone-binding subunit that may target chromatin assembly factors, chromatin remodeling factors and histone deacetylases to their histone substrates in a manner that is regulated by nucleosomal DNA. Component of the flowering autonomous pathway which positively regulates flowering by promoting transcriptional repression of the flowering repressor FLC. May promote histone deacetylation at the FLC locus leading to the formation of repressive chromatin structures. Forms a histone deacetylase complex with HDA5, HDA6 and FLD that represses FLC gene expression to control flowering time. Also negatively regulates cold-responsive genes. Acts together with PDP1 and MSI5 to regulate the function of the PRC2 complex on FLC. Required for systemic acquired resistance (SAR) toward pathogenic bacteria (e.g. Pseudomonas syringae pv tomato DC3000 (avrPto)). Together with FLD and MSI4/FVE, contributes to dehydroabietinal-dependent (DA, a diterpenoid tricyclic diterpene) activation of flowering ans SAR. This Arabidopsis thaliana (Mouse-ear cress) protein is WD-40 repeat-containing protein MSI4.